Consider the following 383-residue polypeptide: Lipid-A-disaccharide synthase (383 aa).

This sequence belongs to the LpxB family.

The catalysed reaction is a lipid X + a UDP-2-N,3-O-bis[(3R)-3-hydroxyacyl]-alpha-D-glucosamine = a lipid A disaccharide + UDP + H(+). Its pathway is bacterial outer membrane biogenesis; LPS lipid A biosynthesis. In terms of biological role, condensation of UDP-2,3-diacylglucosamine and 2,3-diacylglucosamine-1-phosphate to form lipid A disaccharide, a precursor of lipid A, a phosphorylated glycolipid that anchors the lipopolysaccharide to the outer membrane of the cell. The protein is Lipid-A-disaccharide synthase of Anaeromyxobacter dehalogenans (strain 2CP-C).